An 800-amino-acid chain; its full sequence is Phenylalanine--tRNA ligase beta subunit (800 aa).

The 116-residue stretch at 39–154 (TKDIKNLVVG…ESQVPGTDAL (116 aa)) folds into the tRNA-binding domain. Positions 408-483 (AFITPIDITA…RIYGYDDIPS (76 aa)) constitute a B5 domain. The Mg(2+) site is built by Asp-461, Asp-467, Glu-470, and Glu-471. In terms of domain architecture, FDX-ACB spans 708–800 (PRFPGMSRDI…ALIEQGAVIR (93 aa)).

This sequence belongs to the phenylalanyl-tRNA synthetase beta subunit family. Type 1 subfamily. As to quaternary structure, tetramer of two alpha and two beta subunits. It depends on Mg(2+) as a cofactor.

It localises to the cytoplasm. It carries out the reaction tRNA(Phe) + L-phenylalanine + ATP = L-phenylalanyl-tRNA(Phe) + AMP + diphosphate + H(+). The polypeptide is Phenylalanine--tRNA ligase beta subunit (Staphylococcus aureus (strain MSSA476)).